The chain runs to 142 residues: Probable inactive dual specificity protein phosphatase-like At4g18593 (142 aa).

Belongs to the protein-tyrosine phosphatase family. Non-receptor class dual specificity subfamily.

This Arabidopsis thaliana (Mouse-ear cress) protein is Probable inactive dual specificity protein phosphatase-like At4g18593.